Consider the following 42-residue polypeptide: Cytochrome b6-f complex subunit 7 (42 aa).

The helical transmembrane segment at 19-37 threads the bilayer; that stretch reads AVVCFSMTLFGLSLGFGLL.

The protein belongs to the PetM family. In terms of assembly, the 4 large subunits of the cytochrome b6-f complex are cytochrome b6, subunit IV (17 kDa polypeptide, PetD), cytochrome f and the Rieske protein, while the 4 small subunits are PetG, PetL, PetM and PetN. The complex functions as a dimer.

It localises to the plastid. The protein resides in the chloroplast thylakoid membrane. In terms of biological role, component of the cytochrome b6-f complex, which mediates electron transfer between photosystem II (PSII) and photosystem I (PSI), cyclic electron flow around PSI, and state transitions. This chain is Cytochrome b6-f complex subunit 7, found in Phaeodactylum tricornutum (strain CCAP 1055/1).